Reading from the N-terminus, the 529-residue chain is Type I inositol polyphosphate 5-phosphatase 5 (529 aa).

2 catalytic regions span residues 371–386 (DRVL…VALT) and 451–466 (KRRT…WKGE).

The protein belongs to the inositol polyphosphate 5-phosphatase family.

May be involved in the regulation of root hairs development. Required for restricting both the size of the root-hair initiation site and the width of the root hairs during the transition to tip growth, but is not required for normal subsequent tip growth. The sequence is that of Type I inositol polyphosphate 5-phosphatase 5 from Arabidopsis thaliana (Mouse-ear cress).